The following is a 379-amino-acid chain: uncharacterized protein (379 aa).

This is an uncharacterized protein from Sinorhizobium fredii (strain NBRC 101917 / NGR234).